The primary structure comprises 512 residues: Altronate oxidoreductase (512 aa).

26–37 (VLQFGEGNFLRG) is a binding site for NAD(+).

The protein belongs to the mannitol dehydrogenase family. UxaB subfamily.

It carries out the reaction D-altronate + NAD(+) = keto-D-tagaturonate + NADH + H(+). Its pathway is carbohydrate metabolism; pentose and glucuronate interconversion. The chain is Altronate oxidoreductase from Halalkalibacterium halodurans (strain ATCC BAA-125 / DSM 18197 / FERM 7344 / JCM 9153 / C-125) (Bacillus halodurans).